A 399-amino-acid chain; its full sequence is Subtilisin-like protease 4 (399 aa).

The N-terminal stretch at 1–19 is a signal peptide; it reads MVCLKTLSVFLAAFAAADA. Positions 20–118 are excised as a propeptide; that stretch reads RAVFKTQGHK…VEQDQVVRIS (99 aa). An Inhibitor I9 domain is found at 38 to 117; the sequence is YIVVMKDGVS…YVEQDQVVRI (80 aa). A glycan (N-linked (GlcNAc...) asparagine) is linked at N102. One can recognise a Peptidase S8 domain in the interval 128–399; sequence SWGLGRVSHR…NRLLYNGSGQ (272 aa). Residues D160 and H191 each act as charge relay system in the active site. Residues N252 and N308 are each glycosylated (N-linked (GlcNAc...) asparagine). The active-site Charge relay system is the S346. N-linked (GlcNAc...) asparagine glycosylation is present at N395.

The protein belongs to the peptidase S8 family.

It is found in the secreted. In terms of biological role, secreted subtilisin-like serine protease with keratinolytic activity that contributes to pathogenicity. The chain is Subtilisin-like protease 4 (SUB4) from Trichophyton rubrum (Athlete's foot fungus).